A 165-amino-acid polypeptide reads, in one-letter code: Nucleotide-binding protein CHY_1197 (165 aa).

Belongs to the YajQ family.

Functionally, nucleotide-binding protein. This Carboxydothermus hydrogenoformans (strain ATCC BAA-161 / DSM 6008 / Z-2901) protein is Nucleotide-binding protein CHY_1197.